Consider the following 461-residue polypeptide: Alpha-L-fucosidase (461 aa).

A signal peptide spans 1 to 18 (MKMIIIFFILLILNLIKS).

The protein belongs to the glycosyl hydrolase 29 family.

It carries out the reaction an alpha-L-fucoside + H2O = L-fucose + an alcohol. Alpha-L-fucosidase is responsible for hydrolyzing the alpha-1,6-linked fucose joined to the reducing-end N-acetylglucosamine of the carbohydrate moieties of glycoproteins. This Dictyostelium discoideum (Social amoeba) protein is Alpha-L-fucosidase (alfA).